Reading from the N-terminus, the 336-residue chain is COP9 signalosome complex subunit 5 (336 aa).

Residues 44-181 (VRISSVAMIK…IGAFRTIPEG (138 aa)) enclose the MPN domain. The Zn(2+) site is built by His127, His129, and Asp140. The JAMM motif signature appears at 127–140 (HSHPGYGCWLSGID).

The protein belongs to the peptidase M67A family. CSN5 subfamily. Component of the COP9 signalosome (CSN) complex.

It is found in the cytoplasm. It localises to the nucleus. Catalytic component of the COP9 signalosome (CSN) complex that acts as an regulator of the ubiquitin (Ubl) conjugation pathway by mediating the deneddylation of the cullin subunit of SCF-type E3 ubiquitin-protein ligase complexes. The CSN complex is involved in the regulation of the circadian clock through its control of the stability of the SCF(FWD-1) complex. The sequence is that of COP9 signalosome complex subunit 5 (csn-5) from Neurospora crassa (strain ATCC 24698 / 74-OR23-1A / CBS 708.71 / DSM 1257 / FGSC 987).